Reading from the N-terminus, the 156-residue chain is Dihydrofolate reductase (156 aa).

The region spanning 1–156 is the DHFR domain; it reads MLKLIWCQTL…VNYYSNKKEK (156 aa).

The protein belongs to the dihydrofolate reductase family.

The catalysed reaction is (6S)-5,6,7,8-tetrahydrofolate + NADP(+) = 7,8-dihydrofolate + NADPH + H(+). The protein operates within cofactor biosynthesis; tetrahydrofolate biosynthesis; 5,6,7,8-tetrahydrofolate from 7,8-dihydrofolate: step 1/1. Functionally, key enzyme in folate metabolism. Catalyzes an essential reaction for de novo glycine and purine synthesis, and for DNA precursor synthesis. The polypeptide is Dihydrofolate reductase (folA) (Ureaplasma parvum serovar 3 (strain ATCC 700970)).